Consider the following 294-residue polypeptide: Acetyl-coenzyme A carboxylase carboxyl transferase subunit beta (294 aa).

In terms of domain architecture, CoA carboxyltransferase N-terminal spans 30 to 294 (IMTKCPECKK…PEVGGEADGE (265 aa)). Residues C34, C37, C53, and C56 each coordinate Zn(2+). Residues 34 to 56 (CPECKKIMYTKELQKNLMVCNYC) form a C4-type zinc finger.

This sequence belongs to the AccD/PCCB family. As to quaternary structure, acetyl-CoA carboxylase is a heterohexamer composed of biotin carboxyl carrier protein (AccB), biotin carboxylase (AccC) and two subunits each of ACCase subunit alpha (AccA) and ACCase subunit beta (AccD). The cofactor is Zn(2+).

The protein resides in the cytoplasm. The enzyme catalyses N(6)-carboxybiotinyl-L-lysyl-[protein] + acetyl-CoA = N(6)-biotinyl-L-lysyl-[protein] + malonyl-CoA. It functions in the pathway lipid metabolism; malonyl-CoA biosynthesis; malonyl-CoA from acetyl-CoA: step 1/1. Functionally, component of the acetyl coenzyme A carboxylase (ACC) complex. Biotin carboxylase (BC) catalyzes the carboxylation of biotin on its carrier protein (BCCP) and then the CO(2) group is transferred by the transcarboxylase to acetyl-CoA to form malonyl-CoA. The protein is Acetyl-coenzyme A carboxylase carboxyl transferase subunit beta of Listeria monocytogenes serotype 4b (strain F2365).